Consider the following 266-residue polypeptide: MIEAVDICVQRGKKQILKHVDLQAKNGAITVIIGPNGSGKSTFVKALSGEIPYSGKMTLNGHDVTQTKTSKMATMRAVLPQSTTLAFPFLVHEVVELGLSINKFTIAKKQFQNLPQKTLERVGLADYGHRLYHQLSGGEQARVQLARVLCQIWEPICNKIPRWMILDEPIASLDIQHQLVVMNIARNFAHRGGGVLAILHDLNLAAHYADKMILLKQGKVYCEGSASTVLTTQNLRDVYSCSLNVSELPQADIPFILPQTAQPLMK.

An ABC transporter domain is found at 2-242 (IEAVDICVQR…QNLRDVYSCS (241 aa)). 34 to 41 (GPNGSGKS) contacts ATP.

The protein belongs to the ABC transporter superfamily. Heme (hemin) importer (TC 3.A.1.14.5) family. The complex is composed of two ATP-binding proteins (HmuV), two transmembrane proteins (HmuU) and a solute-binding protein (HmuT).

It localises to the cell inner membrane. Part of the ABC transporter complex HmuTUV involved in hemin import. Responsible for energy coupling to the transport system. This chain is Hemin import ATP-binding protein HmuV, found in Bartonella henselae (strain ATCC 49882 / DSM 28221 / CCUG 30454 / Houston 1) (Rochalimaea henselae).